Here is a 274-residue protein sequence, read N- to C-terminus: MTLQSQKAILSSFIEGAPPGELADVVADIKNLTSSTPNLINELGPAFQKYNEEQFTTVKLPGSSQHVIISSHNSLGGSRYYDVETSTSFAFDHTTQKASAVETYVVEGAQGDLTKSVIKALAPYVKEHYSNAAYGAWPIENDSKVAIIIVANKYSPNNYWNGRWRSLYILDPAAGTVEGSIKVDVHYYEDGNVRLLTDKPVTASVSATGAAIVKEISAVEKKYQEELNRSFASLSEGAFKALRRQLPVTRQKIEWEKIAGYRLGQDIGGGGARR.

Belongs to the F-actin-capping protein alpha subunit family. Heterodimer of an alpha and a beta subunit.

The protein localises to the cytoplasm. F-actin-capping proteins bind in a Ca(2+)-independent manner to the fast growing ends of actin filaments (barbed end) thereby blocking the exchange of subunits at these ends. Unlike other capping proteins (such as gelsolin and severin), these proteins do not sever actin filaments. The polypeptide is F-actin-capping protein subunit alpha (Chaetomium thermophilum (strain DSM 1495 / CBS 144.50 / IMI 039719) (Thermochaetoides thermophila)).